Reading from the N-terminus, the 269-residue chain is Type II restriction enzyme SfiI (269 aa).

It carries out the reaction Endonucleolytic cleavage of DNA to give specific double-stranded fragments with terminal 5'-phosphates.. An F and P subtype restriction enzyme that recognizes the double-stranded sequence 5'-GGCCN(5)GGCC-3' and cleaves before N-9. The protein is Type II restriction enzyme SfiI (sfiIR) of Streptomyces fimbriatus.